The sequence spans 61 residues: Metallothionein-1E (61 aa).

M1 is subject to N-acetylmethionine. Positions 1 to 29 (MDPNCSCPTGGSCSCAGSCTCKACRCTSC) are beta. Positions 5, 7, 13, 15, 19, 21, 24, 26, 29, 33, 34, 36, 37, 41, 44, 48, 50, 57, 59, and 60 each coordinate a divalent metal cation. The segment at 30–61 (KKSCCSCCPVGCAKCAQGCICKGASDKCSCCA) is alpha.

It belongs to the metallothionein superfamily. Type 1 family. Monomer.

Metallothioneins have a high content of cysteine residues that bind various heavy metals; these proteins are transcriptionally regulated by both heavy metals and glucocorticoids. This Sus scrofa (Pig) protein is Metallothionein-1E (MT1E).